Here is a 627-residue protein sequence, read N- to C-terminus: Endoglucanase 5 (627 aa).

The first 26 residues, 1–26, serve as a signal peptide directing secretion; it reads MRKFGGSLFGVSLLLSVLLAAATAAA. D83 serves as the catalytic Nucleophile. An N-linked (GlcNAc...) asparagine glycan is attached at N196. H416 is an active-site residue. A glycan (N-linked (GlcNAc...) asparagine) is linked at N465. Catalysis depends on residues D468 and E477. The N-linked (GlcNAc...) asparagine glycan is linked to N561.

The protein belongs to the glycosyl hydrolase 9 (cellulase E) family.

The protein resides in the secreted. It catalyses the reaction Endohydrolysis of (1-&gt;4)-beta-D-glucosidic linkages in cellulose, lichenin and cereal beta-D-glucans.. The polypeptide is Endoglucanase 5 (Arabidopsis thaliana (Mouse-ear cress)).